We begin with the raw amino-acid sequence, 909 residues long: Nitrate reductase [NADH] (909 aa).

Mo-molybdopterin is bound at residue Cys187. Residues 535–610 (SKMYSMSEVK…LEDFRIGELI (76 aa)) form the Cytochrome b5 heme-binding domain. Heme is bound by residues His570 and His593. In terms of domain architecture, FAD-binding FR-type spans 652-764 (REKIPCKLVD…KGPLGHIEYQ (113 aa)). FAD is bound by residues 704–707 (RAYT), 721–725 (VVKIY), Phe726, Phe733, 738–740 (QMS), and Thr791.

It belongs to the nitrate reductase family. Homodimer. FAD serves as cofactor. It depends on heme as a cofactor. Requires Mo-molybdopterin as cofactor.

The enzyme catalyses nitrite + NAD(+) + H2O = nitrate + NADH + H(+). Its activity is regulated as follows. Regulated by the nitrogen source and controlled by the circadian rhythm. Nitrate reductase is a key enzyme involved in the first step of nitrate assimilation in plants, fungi and bacteria. This chain is Nitrate reductase [NADH] (NIA), found in Petunia hybrida (Petunia).